Here is an 80-residue protein sequence, read N- to C-terminus: Serine rich endogenous peptide 18 (80 aa).

Positions 1-25 (MYNVVVCLLTLSFLLLTGLSNTAEA) are cleaved as a signal peptide. The short motif at 45–59 (KAEVGGSCSPHAHGR) is the SCOOP motif element. Residues 50–80 (GSCSPHAHGRGPPNRPGSSNIPGSPKRCTKP) are disordered. Residues 51–53 (SCS) carry the SxS motif essential for MIK2 binding motif.

The protein belongs to the serine rich endogenous peptide (SCOOP) phytocytokine family. Interacts with MIK2 (via extracellular leucine-rich repeat domain); this interaction triggers the formation of complex between MIK2 and the BAK1/SERK3 and SERK4 coreceptors, and subsequent BAK1 activation by phosphorylation.

It is found in the cell membrane. It localises to the secreted. The protein resides in the extracellular space. The protein localises to the apoplast. In terms of biological role, brassicaceae-specific phytocytokine (plant endogenous peptide released into the apoplast) perceived by MIK2 in a BAK1/SERK3 and SERK4 coreceptors-dependent manner, that modulates various physiological and antimicrobial processes including growth prevention and reactive oxygen species (ROS) response regulation. This is Serine rich endogenous peptide 18 from Arabidopsis thaliana (Mouse-ear cress).